The sequence spans 360 residues: MTATLERRESASLWERFCTWITSTENRLYIGWFGVVMIPTLLTATSVFIIAFVAAPPVDIDGIREPVAGSLLYGNNIISGAIIPSSAAIGIHFYPIWEAASLDEWLYNGGPYQLIVLHFLLGVCCYIGREWELSYRLGMRPWISVAFTAPVAAAAAVFLVYPIGQGSFSDGMPLGISGTFNFMLVFQAEHNILMHPFHQLGVAGVFGGSLFSAMHGSLVTSSLIRETTENESANYGYKFGQEEETYNIVAAHGYFGRLIFQYASFNNSRALHFFLGAWPVVGIWLTSMSVSTMALNLNGFNFNQSVVDSQGRVINTWADILNRANLGMEVMHERNAHNFPLDLASGDSCPVALVAPSING.

3 consecutive transmembrane segments (helical) span residues 29–46, 118–133, and 142–156; these read YIGWFGVVMIPTLLTATS, HFLLGVCCYIGREWEL, and WISVAFTAPVAAAAA. Histidine 118 lines the chlorophyll a pocket. Tyrosine 126 provides a ligand contact to pheophytin a. [CaMn4O5] cluster-binding residues include aspartate 170 and glutamate 189. A helical transmembrane segment spans residues 197–218; sequence FHQLGVAGVFGGSLFSAMHGSL. Position 198 (histidine 198) interacts with chlorophyll a. A quinone contacts are provided by residues histidine 215 and 264-265; that span reads SF. Residue histidine 215 participates in Fe cation binding. Histidine 272 provides a ligand contact to Fe cation. The chain crosses the membrane as a helical span at residues 274–288; it reads FLGAWPVVGIWLTSM. [CaMn4O5] cluster is bound by residues histidine 332, glutamate 333, aspartate 342, and alanine 344. Residues 345-360 constitute a propeptide that is removed on maturation; it reads SGDSCPVALVAPSING.

Belongs to the reaction center PufL/M/PsbA/D family. In terms of assembly, PSII is composed of 1 copy each of membrane proteins PsbA, PsbB, PsbC, PsbD, PsbE, PsbF, PsbH, PsbI, PsbJ, PsbK, PsbL, PsbM, PsbT, PsbX, PsbY, PsbZ, Psb30/Ycf12, at least 3 peripheral proteins of the oxygen-evolving complex and a large number of cofactors. It forms dimeric complexes. The cofactor is The D1/D2 heterodimer binds P680, chlorophylls that are the primary electron donor of PSII, and subsequent electron acceptors. It shares a non-heme iron and each subunit binds pheophytin, quinone, additional chlorophylls, carotenoids and lipids. D1 provides most of the ligands for the Mn4-Ca-O5 cluster of the oxygen-evolving complex (OEC). There is also a Cl(-1) ion associated with D1 and D2, which is required for oxygen evolution. The PSII complex binds additional chlorophylls, carotenoids and specific lipids.. Tyr-161 forms a radical intermediate that is referred to as redox-active TyrZ, YZ or Y-Z. In terms of processing, C-terminally processed by CTPA; processing is essential to allow assembly of the oxygen-evolving complex and thus photosynthetic growth.

The protein resides in the plastid. It localises to the chloroplast thylakoid membrane. It catalyses the reaction 2 a plastoquinone + 4 hnu + 2 H2O = 2 a plastoquinol + O2. Functionally, photosystem II (PSII) is a light-driven water:plastoquinone oxidoreductase that uses light energy to abstract electrons from H(2)O, generating O(2) and a proton gradient subsequently used for ATP formation. It consists of a core antenna complex that captures photons, and an electron transfer chain that converts photonic excitation into a charge separation. The D1/D2 (PsbA/PsbD) reaction center heterodimer binds P680, the primary electron donor of PSII as well as several subsequent electron acceptors. The polypeptide is Photosystem II protein D1 (Palmaria palmata (Dulse)).